The primary structure comprises 204 residues: Holliday junction branch migration complex subunit RuvA (204 aa).

Positions 1–64 (MIAKLTGILD…ETDQRLIGFT (64 aa)) are domain I. The segment at 65–143 (SAGERAWFRL…GLAGYASPVG (79 aa)) is domain II. The flexible linker stretch occupies residues 144-154 (PGGEAFVAPPG). The segment at 154–204 (GNASADAVSALQNLGFKPAVASSAVAAAVKELGEDAGLNDLVRVALKRAAG) is domain III.

It belongs to the RuvA family. Homotetramer. Forms an RuvA(8)-RuvB(12)-Holliday junction (HJ) complex. HJ DNA is sandwiched between 2 RuvA tetramers; dsDNA enters through RuvA and exits via RuvB. An RuvB hexamer assembles on each DNA strand where it exits the tetramer. Each RuvB hexamer is contacted by two RuvA subunits (via domain III) on 2 adjacent RuvB subunits; this complex drives branch migration. In the full resolvosome a probable DNA-RuvA(4)-RuvB(12)-RuvC(2) complex forms which resolves the HJ.

It localises to the cytoplasm. The RuvA-RuvB-RuvC complex processes Holliday junction (HJ) DNA during genetic recombination and DNA repair, while the RuvA-RuvB complex plays an important role in the rescue of blocked DNA replication forks via replication fork reversal (RFR). RuvA specifically binds to HJ cruciform DNA, conferring on it an open structure. The RuvB hexamer acts as an ATP-dependent pump, pulling dsDNA into and through the RuvAB complex. HJ branch migration allows RuvC to scan DNA until it finds its consensus sequence, where it cleaves and resolves the cruciform DNA. The polypeptide is Holliday junction branch migration complex subunit RuvA (Novosphingobium aromaticivorans (strain ATCC 700278 / DSM 12444 / CCUG 56034 / CIP 105152 / NBRC 16084 / F199)).